The chain runs to 541 residues: Chaperonin GroEL (541 aa).

Residues 29-32 (TLGP), 86-90 (DGTTT), Gly413, 478-480 (NAA), and Asp494 contribute to the ATP site.

Belongs to the chaperonin (HSP60) family. In terms of assembly, forms a cylinder of 14 subunits composed of two heptameric rings stacked back-to-back. Interacts with the co-chaperonin GroES.

The protein localises to the cytoplasm. It carries out the reaction ATP + H2O + a folded polypeptide = ADP + phosphate + an unfolded polypeptide.. Its function is as follows. Together with its co-chaperonin GroES, plays an essential role in assisting protein folding. The GroEL-GroES system forms a nano-cage that allows encapsulation of the non-native substrate proteins and provides a physical environment optimized to promote and accelerate protein folding. This chain is Chaperonin GroEL, found in Agathobacter rectalis (strain ATCC 33656 / DSM 3377 / JCM 17463 / KCTC 5835 / VPI 0990) (Eubacterium rectale).